A 1396-amino-acid chain; its full sequence is DNA-directed RNA polymerase subunit beta' (1396 aa).

The Zn(2+) site is built by Cys70, Cys72, Cys85, and Cys88. Mg(2+)-binding residues include Asp460, Asp462, and Asp464. Zn(2+) contacts are provided by Cys814, Cys889, Cys896, and Cys899.

It belongs to the RNA polymerase beta' chain family. As to quaternary structure, the RNAP catalytic core consists of 2 alpha, 1 beta, 1 beta' and 1 omega subunit. When a sigma factor is associated with the core the holoenzyme is formed, which can initiate transcription. Mg(2+) serves as cofactor. The cofactor is Zn(2+).

The enzyme catalyses RNA(n) + a ribonucleoside 5'-triphosphate = RNA(n+1) + diphosphate. DNA-dependent RNA polymerase catalyzes the transcription of DNA into RNA using the four ribonucleoside triphosphates as substrates. The polypeptide is DNA-directed RNA polymerase subunit beta' (Hahella chejuensis (strain KCTC 2396)).